The chain runs to 61 residues: MSFLKKSLFLVLFLGLVSFSICEEEKRETEEEENEDEIEEQSEEKKRFEPVPPGFTPFRQT.

The first 22 residues, 1-22 (MSFLKKSLFLVLFLGLVSFSIC), serve as a signal peptide directing secretion. The propeptide occupies 23–50 (EEEKRETEEEENEDEIEEQSEEKKRFEP). The tract at residues 24-61 (EEKRETEEEENEDEIEEQSEEKKRFEPVPPGFTPFRQT) is disordered. The segment covering 30 to 42 (EEEENEDEIEEQS) has biased composition (acidic residues). A 4-hydroxyproline modification is found at proline 52.

The protein belongs to the frog skin active peptide (FSAP) family. Bradykinin-related peptide subfamily. As to expression, expressed by the skin glands.

It localises to the secreted. In terms of biological role, may produce in vitro relaxation of rat arterial smooth muscle and constriction of intestinal smooth muscle. May target bradykinin receptors (BDKRB). The chain is Probradykinin-2 from Pithecopus azureus (Orange-legged monkey tree frog).